The sequence spans 621 residues: uncharacterized protein (621 aa).

4 stretches are compositionally biased toward low complexity: residues 1 to 10, 63 to 79, 137 to 182, and 309 to 347; these read MIEDNINNNE, TEPL…TTPS, NNNN…NNFN, and NQSI…NNNN. Disordered stretches follow at residues 1–29, 63–100, 135–194, 307–374, 430–471, 492–539, and 594–614; these read MIED…DKNN, TEPL…SNKT, DDNN…KDND, KTNQ…EDDT, YNNN…IAKR, KQSQ…IKII, and PTQI…SPSK. A compositionally biased stretch (polar residues) spans 348-357; that stretch reads STLTSSNSLS. Composition is skewed to low complexity over residues 431–459, 496–539, and 597–613; these read NNNN…NNNN, NNNN…IKII, and INSN…SSPS.

This is an uncharacterized protein from Dictyostelium discoideum (Social amoeba).